The primary structure comprises 208 residues: Protein-L-isoaspartate O-methyltransferase (208 aa).

The active site involves S59.

It belongs to the methyltransferase superfamily. L-isoaspartyl/D-aspartyl protein methyltransferase family.

The protein localises to the cytoplasm. It catalyses the reaction [protein]-L-isoaspartate + S-adenosyl-L-methionine = [protein]-L-isoaspartate alpha-methyl ester + S-adenosyl-L-homocysteine. Catalyzes the methyl esterification of L-isoaspartyl residues in peptides and proteins that result from spontaneous decomposition of normal L-aspartyl and L-asparaginyl residues. It plays a role in the repair and/or degradation of damaged proteins. This Escherichia coli O7:K1 (strain IAI39 / ExPEC) protein is Protein-L-isoaspartate O-methyltransferase.